Consider the following 63-residue polypeptide: Gallinacin-4 (63 aa).

The N-terminal stretch at 1–19 is a signal peptide; it reads MKILCFFIVLLFVAVHGAV. Residues 20–25 constitute a propeptide that is removed on maturation; that stretch reads GFSRSP. 3 disulfides stabilise this stretch: Cys-31-Cys-59, Cys-38-Cys-53, and Cys-43-Cys-60.

Belongs to the beta-defensin family. As to expression, strong expression in the bone marrow and testis. Widely expressed. Weak expression in the ovarian stroma, but not expressed in the ovarian follicles.

The protein resides in the secreted. It localises to the cytoplasmic granule. Has bactericidal activity. Potent activity against S.typhimurium and S.entiriditis. The chain is Gallinacin-4 (GAL4) from Gallus gallus (Chicken).